The sequence spans 175 residues: Avenin-like a7 (175 aa).

The signal sequence occupies residues 1–19; it reads MKTMFILALLAFTATSAVA.

The protein belongs to the prolamin family. Contains 7 disulfide bonds.

Its function is as follows. Seed storage protein. Not integrated in the gluten polymer through disulfide bonds, unless incorporated by reduction and reoxidation during dough making. Increases dough strength and bread volume, but decreases dough stability when added into a base wheat flour. The protein is Avenin-like a7 of Triticum aestivum (Wheat).